The chain runs to 280 residues: Energy-coupling factor transporter ATP-binding protein EcfA1 (280 aa).

Positions 6 to 241 constitute an ABC transporter domain; that stretch reads LRTENISFQY…SHMLQEIGLD (236 aa). Position 40–47 (40–47) interacts with ATP; that stretch reads GQNGSGKS.

It belongs to the ABC transporter superfamily. Energy-coupling factor EcfA family. As to quaternary structure, forms a stable energy-coupling factor (ECF) transporter complex composed of 2 membrane-embedded substrate-binding proteins (S component), 2 ATP-binding proteins (A component) and 2 transmembrane proteins (T component).

The protein localises to the cell membrane. In terms of biological role, ATP-binding (A) component of a common energy-coupling factor (ECF) ABC-transporter complex. Unlike classic ABC transporters this ECF transporter provides the energy necessary to transport a number of different substrates. In Bacillus cereus (strain ZK / E33L), this protein is Energy-coupling factor transporter ATP-binding protein EcfA1.